A 1408-amino-acid chain; its full sequence is ABC multidrug transporter MDR1 (1408 aa).

Residues 79–88 (IAASSDTLRN) show a composition bias toward polar residues. The tract at residues 79-102 (IAASSDTLRNSPLEKPISNAFSKS) is disordered. The next 2 helical transmembrane spans lie at 147–167 (FAAPLEIIAMVLGLVLAVAAG) and 223–243 (LYLMAIGIGMFLATWLYMFIW). Residues 157 to 464 (VLGLVLAVAA…LAPELAAVTK (308 aa)) enclose the ABC transmembrane type-1 1 domain. N244 carries an N-linked (GlcNAc...) asparagine glycan. A run of 4 helical transmembrane segments spans residues 296 to 316 (KVALVFQYAGTFVCGFVLAFV), 321 to 341 (LAGALVSILPVIMLCGGIMMT), 408 to 428 (IMFFVIYAAYALAFFYGGILV), and 436 to 456 (GIVINVFMSILIGSFSMAMLA). Residues 499-744 (ISFENVKFHY…ENGPYAQLVN (246 aa)) enclose the ABC transporter 1 domain. 534 to 541 (GASGSGKS) serves as a coordination point for ATP. Residue N606 is glycosylated (N-linked (GlcNAc...) asparagine). The next 2 helical transmembrane spans lie at 838–858 (IIAFIAAICAGMVYPSLAILF) and 882–902 (LWYFITALAAAFVIFFQSAGF). Residues 838-1125 (IIAFIAAICA…VFTFVPDASK (288 aa)) enclose the ABC transmembrane type-1 2 domain. Residue N934 is glycosylated (N-linked (GlcNAc...) asparagine). The next 4 membrane-spanning stretches (helical) occupy residues 952-972 (GLFGPTLGTVVQSCATLIGGC), 981-999 (LLALIGIACIPILVSGGYI), 1072-1092 (GLTFCIIALVFYIGALWIIDA), and 1099-1119 (FYTVLNSIVFASIQAGNVFTF). 2 N-linked (GlcNAc...) asparagine glycosylation sites follow: N1127 and N1182. In terms of domain architecture, ABC transporter 2 spans 1162 to 1402 (VRIEGVHFRY…KGGYYELVQM (241 aa)). 1197–1204 (GPSGCGKS) is a binding site for ATP. N1404 carries N-linked (GlcNAc...) asparagine glycosylation.

Belongs to the ABC transporter superfamily. ABCB family. Multidrug resistance exporter (TC 3.A.1.201) subfamily.

The protein localises to the cell membrane. The enzyme catalyses itraconazole(in) + ATP + H2O = itraconazole(out) + ADP + phosphate + H(+). The catalysed reaction is voriconazole(in) + ATP + H2O = voriconazole(out) + ADP + phosphate + H(+). It carries out the reaction fluconazole(in) + ATP + H2O = fluconazole(out) + ADP + phosphate + H(+). Functionally, pleiotropic ABC efflux transporter that confers resistance to structurally and functionally unrelated compounds including azoles such as fluconazole (FLC), itraconazole (ITC), posaconazole (POS), and voriconazole (VRC). The chain is ABC multidrug transporter MDR1 from Cryptococcus neoformans var. grubii serotype A (strain H99 / ATCC 208821 / CBS 10515 / FGSC 9487) (Filobasidiella neoformans var. grubii).